Consider the following 63-residue polypeptide: U-reduvitoxin-Pr9a (63 aa).

An N-terminal signal peptide occupies residues Met1–Ala19. The propeptide occupies Ala20–Leu42. A disulfide bridge links Cys47 with Cys60.

Expressed by the venom gland.

Its subcellular location is the secreted. This chain is U-reduvitoxin-Pr9a, found in Platymeris rhadamanthus (Red spot assassin bug).